A 1165-amino-acid chain; its full sequence is Transient receptor potential cation channel subfamily M member 5 (1165 aa).

Over 1–715 (MVEKSSERFD…LRRWNRFWSA (715 aa)) the chain is Cytoplasmic. Ser-121 bears the Phosphoserine mark. The Ca(2+) site is built by Glu-212, Cys-324, Asp-333, Asp-336, and Glu-337. The chain crosses the membrane as a helical span at residues 716–740 (PVTVFMGNVIMYFAFLILFSYVLLL). Residues 741–751 (DFRPPPPYGPS) lie on the Extracellular side of the membrane. A helical transmembrane segment spans residues 752–771 (AAEIILYFWVFTLVLEEIRQ). Residues Glu-768 and Gln-771 each contribute to the Ca(2+) site. Over 772 to 792 (SFFTDEDMSILKKMKLYVEDN) the chain is Cytoplasmic. A helical membrane pass occupies residues 793 to 811 (WNKCDMVAISLFVVGLSCR). Residues Asn-794 and Asp-797 each contribute to the Ca(2+) site. At 812–818 (MAMSTYE) the chain is on the extracellular side. Residues 819–841 (AGRTVLALDFMVFTLRLIHIFAI) traverse the membrane as a helical segment. The Cytoplasmic portion of the chain corresponds to 842 to 850 (HKQLGPKII). The chain crosses the membrane as a helical span at residues 851 to 880 (IVERMIKDVFFFLFFLSVWLIAYGVTTQAL). Residues 881–889 (LHPNDPRID) are Extracellular-facing. Positions 890–930 (WVFRRALYRPYLHIFGQIPLEEIDAAKMPDDNCTTDVQEII) form an intramembrane region, pore-forming. The Selectivity filter motif lies at 904-906 (FGQ). The Extracellular segment spans residues 931–942 (LGTLPPCPNIYA). Residues 943-977 (NWLVILLLVIYLLVTNVLLLNLLIAMFSYTFQVVQ) traverse the membrane as a helical segment. Residues 978–1165 (ENADIFWKFQ…TDKKLPFIDH (188 aa)) lie on the Cytoplasmic side of the membrane. Position 994 (Glu-994) interacts with Ca(2+). The segment at 1122-1165 (RDAPKAPRSIAGSSRDQQPQGAKRQQPAGHPAYGTDKKLPFIDH) is disordered. Residues 1132–1141 (AGSSRDQQPQ) show a composition bias toward polar residues. Over residues 1156–1165 (TDKKLPFIDH) the composition is skewed to basic and acidic residues.

This sequence belongs to the transient receptor (TC 1.A.4) family. LTrpC subfamily. TRPM5 sub-subfamily. In terms of assembly, homotetramer.

It is found in the cell membrane. It carries out the reaction Na(+)(in) = Na(+)(out). The enzyme catalyses K(+)(in) = K(+)(out). With respect to regulation, ca(2+)-activated cation channel. Displays voltage dependence modulation. Regulated by PI(4,5)P2 levels. PI(4,5)P 2 reverses the Ca(2+) -induced desensitization of channels. Is highly temperature-sensitive. Functionally, monovalent cation-selective ion channel activated by intracellular Ca(2+) in a voltage- and temperature-dependent manner. Mediates the transport of Na(+), K(+) and Cs(+) ions equally well. Activated directly by increase in intracellular Ca(2+), but is impermeable to it. The activation mechanism of TRPM5 involves a multistep process. TRPM5 activation involves ligand binding (i.e., tastant molecule, glucose stimulation) to Gq/G-protein coupled receptors (GPCR) and leads to the breakdown of phosphatidylinositol bisphosphate (PIP2) into diacylglycerol (DAG) and inositol trisphosphate (IP3), IP3 binds to its receptors in the endoplasmic reticulum and cause Ca(2+) release. Simultaneously with the intracellular Ca(2+) release, DAG activates the protein kinase C (PKC), which phosphorylates the TRPM5 channel. This phosphorylation combined with the bound Ca(2+), leads to a robust inward current allowing the entry of sodium ions (Na+) into the cell. This ion influx depolarizes the cell membrane, generating action potentials that propagate TRPM5 signals. The chain is Transient receptor potential cation channel subfamily M member 5 from Danio rerio (Zebrafish).